The primary structure comprises 326 residues: Phospho-N-acetylmuramoyl-pentapeptide-transferase (326 aa).

Transmembrane regions (helical) follow at residues L3–I23, T51–V71, I77–L97, I113–E133, G143–S163, G175–T195, I199–N219, I225–L245, V250–V270, and I306–L326.

The protein belongs to the glycosyltransferase 4 family. MraY subfamily. It depends on Mg(2+) as a cofactor.

It is found in the cell membrane. It carries out the reaction UDP-N-acetyl-alpha-D-muramoyl-L-alanyl-gamma-D-glutamyl-meso-2,6-diaminopimeloyl-D-alanyl-D-alanine + di-trans,octa-cis-undecaprenyl phosphate = di-trans,octa-cis-undecaprenyl diphospho-N-acetyl-alpha-D-muramoyl-L-alanyl-D-glutamyl-meso-2,6-diaminopimeloyl-D-alanyl-D-alanine + UMP. The protein operates within cell wall biogenesis; peptidoglycan biosynthesis. Its function is as follows. Catalyzes the initial step of the lipid cycle reactions in the biosynthesis of the cell wall peptidoglycan: transfers peptidoglycan precursor phospho-MurNAc-pentapeptide from UDP-MurNAc-pentapeptide onto the lipid carrier undecaprenyl phosphate, yielding undecaprenyl-pyrophosphoryl-MurNAc-pentapeptide, known as lipid I. The sequence is that of Phospho-N-acetylmuramoyl-pentapeptide-transferase from Wolbachia sp. subsp. Brugia malayi (strain TRS).